The primary structure comprises 383 residues: tRNA(Met) cytidine acetate ligase (383 aa).

ATP contacts are provided by residues 7 to 20 (IAEF…HEFL), glycine 101, asparagine 153, and 178 to 179 (RI).

It belongs to the TmcAL family.

It is found in the cytoplasm. It carries out the reaction cytidine(34) in elongator tRNA(Met) + acetate + ATP = N(4)-acetylcytidine(34) in elongator tRNA(Met) + AMP + diphosphate. Its function is as follows. Catalyzes the formation of N(4)-acetylcytidine (ac(4)C) at the wobble position of elongator tRNA(Met), using acetate and ATP as substrates. First activates an acetate ion to form acetyladenylate (Ac-AMP) and then transfers the acetyl group to tRNA to form ac(4)C34. This chain is tRNA(Met) cytidine acetate ligase, found in Lactobacillus acidophilus (strain ATCC 700396 / NCK56 / N2 / NCFM).